Here is a 378-residue protein sequence, read N- to C-terminus: C-C chemokine receptor type 7 (378 aa).

The signal sequence occupies residues 1 to 24 (MDLGKPMKSVLVVALLVIFQVCLC). Residues 25-59 (QDEVTDDYIGDNTTVDYTLFESLCSKKDVRNFKAW) lie on the Extracellular side of the membrane. N36 carries an N-linked (GlcNAc...) asparagine glycan. Residues 60-86 (FLPIMYSIICFVGLLGNGLVVLTYIYF) form a helical membrane-spanning segment. The Cytoplasmic segment spans residues 87–95 (KRLKTMTDT). Residues 96-116 (YLLNLAVADILFLLTLPFWAY) form a helical membrane-spanning segment. Topologically, residues 117 to 130 (SAAKSWVFGVHFCK) are extracellular. An intrachain disulfide couples C129 to C210. A helical membrane pass occupies residues 131 to 152 (LIFAIYKMSFFSGMLLLLCISI). The Cytoplasmic segment spans residues 153–170 (DRYVAIVQAVSAHRHRAR). A helical membrane pass occupies residues 171 to 191 (VLLISKLSCVGIWILATVLSI). At 192–219 (PELLYSDLQRSSSEQAMRCSLITEHVEA) the chain is on the extracellular side. A helical membrane pass occupies residues 220-247 (FITIQVAQMVIGFLVPLLAMSFCYLVII). Over 248 to 263 (RTLLQARNFERNKAIK) the chain is Cytoplasmic. The chain crosses the membrane as a helical span at residues 264 to 289 (VIIAVVVVFIVFQLPYNGVVLAQTVA). Over 290–313 (NFNITSSTCELSKQLNIAYDVTYS) the chain is Extracellular. The helical transmembrane segment at 314–331 (LACVRCCVNPFLYAFIGV) threads the bilayer. Residues 332–378 (KFRNDLFKLFKDLGCLSQEQLRQWSSCRHIRRSSMSVEAETTTTFSP) are Cytoplasmic-facing.

This sequence belongs to the G-protein coupled receptor 1 family. As to expression, expressed in various lymphoid tissues and activated B- and T-lymphocytes, strongly up-regulated in B-cells infected with Epstein-Barr virus and T-cells infected with herpesvirus 6 or 7.

It is found in the cell membrane. Its function is as follows. Receptor for the MIP-3-beta chemokine. Probable mediator of EBV effects on B-lymphocytes or of normal lymphocyte functions. This Homo sapiens (Human) protein is C-C chemokine receptor type 7 (CCR7).